Here is a 213-residue protein sequence, read N- to C-terminus: 24 kDa ookinete surface protein (213 aa).

The signal sequence occupies residues 1–28 (MNFKYSFIFLFFIQLAIRYNNAKITVDT). An EGF-like 1; truncated domain is found at 30-59 (CKGGKLIQMSNHYECKCPSGYALKTENTCE). 2 EGF-like domains span residues 60 to 108 (PIVK…NICK) and 108 to 148 (KPTR…GKCT). Intrachain disulfides connect Cys64–Cys80, Cys74–Cys94, Cys96–Cys107, Cys112–Cys122, Cys117–Cys134, and Cys136–Cys147. The 25-residue stretch at 151–175 (GETKCLLKCKAAEECKLTGKHYECV) folds into the EGF-like 4; truncated domain. Residue Asn190 is the site of GPI-anchor amidated asparagine attachment. A glycan (N-linked (GlcNAc...) asparagine) is linked at Asn190. The propeptide at 191-213 (SSFMNGMSIISIIALLVIYVIVM) is removed in mature form.

It localises to the cell membrane. In Plasmodium berghei (strain Anka), this protein is 24 kDa ookinete surface protein.